The following is a 200-amino-acid chain: Small ribosomal subunit protein uS4 (200 aa).

Residues 22 to 43 (TGKELERRPYAPGQHGPTQRKK) are disordered. The region spanning 92–170 (QRLDNIVYRL…VPEYVTFDAE (79 aa)) is the S4 RNA-binding domain.

This sequence belongs to the universal ribosomal protein uS4 family. Part of the 30S ribosomal subunit. Contacts protein S5. The interaction surface between S4 and S5 is involved in control of translational fidelity.

Functionally, one of the primary rRNA binding proteins, it binds directly to 16S rRNA where it nucleates assembly of the body of the 30S subunit. Its function is as follows. With S5 and S12 plays an important role in translational accuracy. This is Small ribosomal subunit protein uS4 from Listeria welshimeri serovar 6b (strain ATCC 35897 / DSM 20650 / CCUG 15529 / CIP 8149 / NCTC 11857 / SLCC 5334 / V8).